Consider the following 255-residue polypeptide: Methylthioribulose-1-phosphate dehydratase (255 aa).

Cys-111 provides a ligand contact to substrate. Residues His-128 and His-130 each coordinate Zn(2+). The Proton donor/acceptor role is filled by Glu-157. His-213 contacts Zn(2+).

This sequence belongs to the aldolase class II family. MtnB subfamily. Requires Zn(2+) as cofactor.

It is found in the cytoplasm. It catalyses the reaction 5-(methylsulfanyl)-D-ribulose 1-phosphate = 5-methylsulfanyl-2,3-dioxopentyl phosphate + H2O. It participates in amino-acid biosynthesis; L-methionine biosynthesis via salvage pathway; L-methionine from S-methyl-5-thio-alpha-D-ribose 1-phosphate: step 2/6. Its function is as follows. Catalyzes the dehydration of methylthioribulose-1-phosphate (MTRu-1-P) into 2,3-diketo-5-methylthiopentyl-1-phosphate (DK-MTP-1-P). This Talaromyces stipitatus (strain ATCC 10500 / CBS 375.48 / QM 6759 / NRRL 1006) (Penicillium stipitatum) protein is Methylthioribulose-1-phosphate dehydratase.